Reading from the N-terminus, the 64-residue chain is Large ribosomal subunit protein bL35 (64 aa).

Composition is skewed to basic residues over residues methionine 1–lysine 15 and alanine 27–arginine 42. A disordered region spans residues methionine 1–threonine 45.

This sequence belongs to the bacterial ribosomal protein bL35 family.

This is Large ribosomal subunit protein bL35 from Streptomyces griseus subsp. griseus (strain JCM 4626 / CBS 651.72 / NBRC 13350 / KCC S-0626 / ISP 5235).